The following is a 366-amino-acid chain: Carbamoyl phosphate synthase small chain (366 aa).

Residues 1–171 form a CPSase region; the sequence is MLEKRYLVLE…KTPYVSTGSD (171 aa). The L-glutamine site is built by Ser47, Gly221, and Gly223. The region spanning 173–360 is the Glutamine amidotransferase type-1 domain; that stretch reads SVVLLDFGKK…IAMMKDFKEK (188 aa). Cys248 (nucleophile) is an active-site residue. Leu249, Gln252, Asn290, Gly292, and Tyr293 together coordinate L-glutamine. Active-site residues include His333 and Glu335.

The protein belongs to the CarA family. As to quaternary structure, composed of two chains; the small (or glutamine) chain promotes the hydrolysis of glutamine to ammonia, which is used by the large (or ammonia) chain to synthesize carbamoyl phosphate. Tetramer of heterodimers (alpha,beta)4.

The catalysed reaction is hydrogencarbonate + L-glutamine + 2 ATP + H2O = carbamoyl phosphate + L-glutamate + 2 ADP + phosphate + 2 H(+). It carries out the reaction L-glutamine + H2O = L-glutamate + NH4(+). It participates in amino-acid biosynthesis; L-arginine biosynthesis; carbamoyl phosphate from bicarbonate: step 1/1. Its pathway is pyrimidine metabolism; UMP biosynthesis via de novo pathway; (S)-dihydroorotate from bicarbonate: step 1/3. Its function is as follows. Small subunit of the glutamine-dependent carbamoyl phosphate synthetase (CPSase). CPSase catalyzes the formation of carbamoyl phosphate from the ammonia moiety of glutamine, carbonate, and phosphate donated by ATP, constituting the first step of 2 biosynthetic pathways, one leading to arginine and/or urea and the other to pyrimidine nucleotides. The small subunit (glutamine amidotransferase) binds and cleaves glutamine to supply the large subunit with the substrate ammonia. This chain is Carbamoyl phosphate synthase small chain, found in Staphylococcus epidermidis (strain ATCC 12228 / FDA PCI 1200).